Here is a 265-residue protein sequence, read N- to C-terminus: MTGSVWAIVPAAGRGTRFGGAVPKQYLHAAGQPLMAYTLAALAAHPAVAGIVVAIAPDDADWPGWTAVHAKPVLTCVGGATRAASVLAGLLALPDGVRADDFVLVHDAARPNLALADLDRLLEIGRGDPVGAILAAPVRDTLKRAGDDGGIDGTEPRERLWRALTPQLFRRHQLIRGLTEASAAGVDVTDEAMAIERLGLRPLLVEGAEDNFKVTTPADLARFEFELANRDRGGASREAERSAMPSAATSVFSGARSAASGSEEV.

Residues D231–R241 are compositionally biased toward basic and acidic residues. The disordered stretch occupies residues D231 to V265. Residues S253–V265 are compositionally biased toward low complexity.

This sequence belongs to the IspD/TarI cytidylyltransferase family. IspD subfamily.

It catalyses the reaction 2-C-methyl-D-erythritol 4-phosphate + CTP + H(+) = 4-CDP-2-C-methyl-D-erythritol + diphosphate. It participates in isoprenoid biosynthesis; isopentenyl diphosphate biosynthesis via DXP pathway; isopentenyl diphosphate from 1-deoxy-D-xylulose 5-phosphate: step 2/6. In terms of biological role, catalyzes the formation of 4-diphosphocytidyl-2-C-methyl-D-erythritol from CTP and 2-C-methyl-D-erythritol 4-phosphate (MEP). The protein is 2-C-methyl-D-erythritol 4-phosphate cytidylyltransferase of Xanthomonas campestris pv. campestris (strain 8004).